The chain runs to 166 residues: Large ribosomal subunit protein uL11 (166 aa).

It belongs to the universal ribosomal protein uL11 family.

In terms of biological role, this protein binds directly to 26S ribosomal RNA. This Prunus armeniaca (Apricot) protein is Large ribosomal subunit protein uL11 (RPL12).